A 271-amino-acid chain; its full sequence is Glutamate racemase (271 aa).

Residues 13 to 14 (DS) and 45 to 46 (YG) contribute to the substrate site. C77 functions as the Proton donor/acceptor in the catalytic mechanism. 78–79 (NT) contributes to the substrate binding site. The active-site Proton donor/acceptor is C192. 193-194 (TH) is a binding site for substrate.

The protein belongs to the aspartate/glutamate racemases family.

It carries out the reaction L-glutamate = D-glutamate. Its pathway is cell wall biogenesis; peptidoglycan biosynthesis. Its function is as follows. Provides the (R)-glutamate required for cell wall biosynthesis. The sequence is that of Glutamate racemase from Sinorhizobium medicae (strain WSM419) (Ensifer medicae).